We begin with the raw amino-acid sequence, 543 residues long: Chaperonin GroEL 2 (543 aa).

ATP-binding positions include 29–32, 86–90, glycine 413, 479–481, and aspartate 495; these read TLGP, DGTTT, and NAA.

Belongs to the chaperonin (HSP60) family. In terms of assembly, forms a cylinder of 14 subunits composed of two heptameric rings stacked back-to-back. Interacts with the co-chaperonin GroES.

The protein resides in the cytoplasm. It catalyses the reaction ATP + H2O + a folded polypeptide = ADP + phosphate + an unfolded polypeptide.. Its function is as follows. Together with its co-chaperonin GroES, plays an essential role in assisting protein folding. The GroEL-GroES system forms a nano-cage that allows encapsulation of the non-native substrate proteins and provides a physical environment optimized to promote and accelerate protein folding. The chain is Chaperonin GroEL 2 from Prochlorococcus marinus (strain NATL1A).